Reading from the N-terminus, the 295-residue chain is Taste receptor type 2 member 120 (295 aa).

Topologically, residues 1-5 (MNLVE) are extracellular. A helical membrane pass occupies residues 6–26 (WIVTIIMMTEFLLGNCANVFI). At 27–45 (TIVNFIDCVKRRKISSADR) the chain is on the cytoplasmic side. Residues 46-66 (IITAIAIFRIGLLWAMLTNWH) form a helical membrane-spanning segment. Residues 67-80 (SHVFTPDTDNLQMR) are Extracellular-facing. A helical membrane pass occupies residues 81–101 (VFGGITWAITNHFTTWLGTIL). Residues 102–127 (SMFYLFKIANFSNSLFLHLKRKLDNV) are Cytoplasmic-facing. The chain crosses the membrane as a helical span at residues 128-148 (LLVIFLGSSLFLVAYLGMVNI). Topologically, residues 149-177 (KKIAWMSIHEGNVTTKSKLKHVTSITNML) are extracellular. An N-linked (GlcNAc...) asparagine glycan is attached at asparagine 160. Residues 178–198 (LFSLINIVPFGISLNCVLLLI) form a helical membrane-spanning segment. Over 199–228 (YSLSKHLKNMKFYGKGCQDQSTMVHIKALQ) the chain is Cytoplasmic. A helical transmembrane segment spans residues 229-249 (TVVSFLLLYATYSSCVIISGW). Residues 250 to 255 (SLQNAP) lie on the Extracellular side of the membrane. Residues 256–276 (VFLFCVTIGSFYPAGHSCILI) form a helical membrane-spanning segment. Topologically, residues 277–295 (WGNQKLKQVFLLLLRQMRC) are cytoplasmic.

The protein belongs to the G-protein coupled receptor T2R family.

It localises to the membrane. In terms of biological role, putative taste receptor which may play a role in the perception of bitterness. The protein is Taste receptor type 2 member 120 of Mus musculus (Mouse).